Here is a 125-residue protein sequence, read N- to C-terminus: Succinate dehydrogenase assembly factor 3, mitochondrial (125 aa).

The N-terminal 30 residues, 1-30 (MTGRHVSRVRSLYRRILQLHRALPPDLKAL), are a transit peptide targeting the mitochondrion.

It belongs to the complex I LYR family. SDHAF3 subfamily. In terms of assembly, interacts with Sdhb within an Sdha-Sdhb subcomplex.

It localises to the mitochondrion matrix. Plays an essential role in the assembly of succinate dehydrogenase (SDH), an enzyme complex (also referred to as respiratory complex II) that is a component of both the tricarboxylic acid (TCA) cycle and the mitochondrial electron transport chain, and which couples the oxidation of succinate to fumarate with the reduction of ubiquinone (coenzyme Q) to ubiquinol. Promotes maturation of the iron-sulfur protein subunit Sdhb of the SDH catalytic dimer, protecting it from the deleterious effects of oxidants. May act together with SDHAF1. The protein is Succinate dehydrogenase assembly factor 3, mitochondrial of Rattus norvegicus (Rat).